The chain runs to 168 residues: MAGDLRQELLAYLHELDIRPVCAEHPEVFTVEEMMPHVQHLGGAHSKNLFLKDKKKKGLWLVSVLHDRQVNLNDLAKKLNLGSGNLRFADEASMLEKLKVGQGCATPLALFCDRGDVQFVLDAQFLEGGYERVYFHPMTNAATLGMTPQEFVTFLKKTGHDPIIIHFD.

Belongs to the PRORSD1 family.

The polypeptide is Prolyl-tRNA synthetase associated domain-containing protein 1 (prorsd1p) (Xenopus laevis (African clawed frog)).